We begin with the raw amino-acid sequence, 151 residues long: Deoxyuridine 5'-triphosphate nucleotidohydrolase (151 aa).

Residues 70–72, N83, 87–89, and M97 each bind substrate; these read RSG and LID.

The protein belongs to the dUTPase family. It depends on Mg(2+) as a cofactor.

It catalyses the reaction dUTP + H2O = dUMP + diphosphate + H(+). Its pathway is pyrimidine metabolism; dUMP biosynthesis; dUMP from dCTP (dUTP route): step 2/2. Functionally, this enzyme is involved in nucleotide metabolism: it produces dUMP, the immediate precursor of thymidine nucleotides and it decreases the intracellular concentration of dUTP so that uracil cannot be incorporated into DNA. In Hamiltonella defensa subsp. Acyrthosiphon pisum (strain 5AT), this protein is Deoxyuridine 5'-triphosphate nucleotidohydrolase.